Here is a 425-residue protein sequence, read N- to C-terminus: Serine--tRNA ligase (425 aa).

Thr230–Glu232 contacts L-serine. Arg261 to Glu263 provides a ligand contact to ATP. Residue Glu284 coordinates L-serine. Glu348–Ser351 lines the ATP pocket. Position 384 (Ser384) interacts with L-serine.

The protein belongs to the class-II aminoacyl-tRNA synthetase family. Type-1 seryl-tRNA synthetase subfamily. In terms of assembly, homodimer. The tRNA molecule binds across the dimer.

Its subcellular location is the cytoplasm. The enzyme catalyses tRNA(Ser) + L-serine + ATP = L-seryl-tRNA(Ser) + AMP + diphosphate + H(+). It catalyses the reaction tRNA(Sec) + L-serine + ATP = L-seryl-tRNA(Sec) + AMP + diphosphate + H(+). It participates in aminoacyl-tRNA biosynthesis; selenocysteinyl-tRNA(Sec) biosynthesis; L-seryl-tRNA(Sec) from L-serine and tRNA(Sec): step 1/1. Functionally, catalyzes the attachment of serine to tRNA(Ser). Is also able to aminoacylate tRNA(Sec) with serine, to form the misacylated tRNA L-seryl-tRNA(Sec), which will be further converted into selenocysteinyl-tRNA(Sec). In Caldanaerobacter subterraneus subsp. tengcongensis (strain DSM 15242 / JCM 11007 / NBRC 100824 / MB4) (Thermoanaerobacter tengcongensis), this protein is Serine--tRNA ligase.